The following is a 660-amino-acid chain: DNA mismatch repair protein MutL (660 aa).

This sequence belongs to the DNA mismatch repair MutL/HexB family.

This protein is involved in the repair of mismatches in DNA. It is required for dam-dependent methyl-directed DNA mismatch repair. May act as a 'molecular matchmaker', a protein that promotes the formation of a stable complex between two or more DNA-binding proteins in an ATP-dependent manner without itself being part of a final effector complex. The chain is DNA mismatch repair protein MutL from Streptococcus equi subsp. equi (strain 4047).